The sequence spans 427 residues: Cyclin-L1-1 (427 aa).

Residues 258–427 (HRRTSDTNAS…SRDKDRHRRQ (170 aa)) are disordered. Polar residues predominate over residues 263–276 (DTNASKESPATTVA). Basic and acidic residues-rich tracts occupy residues 289 to 311 (QEKD…DDGK), 328 to 382 (KSEK…DRDR), 390 to 400 (DRSSGYSDKEK), and 407 to 421 (RDRG…SRDK).

The protein belongs to the cyclin family. Cyclin L subfamily.

This Oryza sativa subsp. japonica (Rice) protein is Cyclin-L1-1 (CYCL1-1).